The chain runs to 337 residues: Inositol 2-dehydrogenase (337 aa).

The protein belongs to the Gfo/Idh/MocA family. In terms of assembly, homotetramer.

The catalysed reaction is myo-inositol + NAD(+) = scyllo-inosose + NADH + H(+). Its function is as follows. Involved in the oxidation of myo-inositol (MI) to 2-keto-myo-inositol (2KMI or 2-inosose). This is Inositol 2-dehydrogenase from Serratia proteamaculans (strain 568).